An 872-amino-acid chain; its full sequence is Trichohyalin-like protein 1 (872 aa).

An EF-hand domain is found at 46 to 81 (CAIHAVERNLNLLNIDSNGAISFDEFVLAIFSFLNV). Residues 117-127 (QWTEGTSQTQD) show a composition bias toward polar residues. 3 disordered regions span residues 117–759 (QWTE…ERGA), 774–813 (LQQTNVTQGEHQNQAQTASVASPEIRRNQSSASLTNDSSD), and 830–872 (EFLP…APKQ). Basic and acidic residues-rich tracts occupy residues 142–155 (SLEERAVEHNRVDP), 164–190 (LPVETSEHSDSKNQHLKGDEQSQKVDQ), 218–235 (TKGEGQNKEILQKGDILA), 296–307 (GKDEPSSEHVDL), 324–348 (AAKDESRTAETPEPPIQEKEYETRD), 365–375 (RVERKGVRGPE), 399–435 (EDKKYHELQESSKEKNAGEDSETHELNSEGGEQKDSE), and 486–505 (SGEKNKMTTKIHDKLVKEDD). The segment covering 538–570 (NSETSDLFVQGDSQSQTNPFRGSVQGSDSNNPE) has biased composition (polar residues). 3 stretches are compositionally biased toward basic and acidic residues: residues 571–584 (TQKHLALSEEKRVQ), 592–608 (RGEDEQVTEEHAQEHEG), and 664–684 (TKKDSRKELKDQSPSTKKEED). 2 stretches are compositionally biased toward polar residues: residues 699–708 (ENNAVSQKTC) and 718–729 (SPQQLAGEQSLS). Over residues 730 to 751 (TKEHDPSVSESGLEERMQRDQE) the composition is skewed to basic and acidic residues. 2 stretches are compositionally biased toward polar residues: residues 774-793 (LQQTNVTQGEHQNQAQTASV) and 801-812 (NQSSASLTNDSS). The span at 849–865 (LEDKQGRPQREELEPQK) shows a compositional bias: basic and acidic residues.

It belongs to the S-100 family.

This is Trichohyalin-like protein 1 (TCHHL1) from Bos taurus (Bovine).